Here is a 253-residue protein sequence, read N- to C-terminus: Triosephosphate isomerase (253 aa).

8–10 (NWK) contacts substrate. The active-site Electrophile is histidine 93. Glutamate 165 (proton acceptor) is an active-site residue. Substrate is bound by residues glycine 171, serine 210, and 231–232 (GG).

It belongs to the triosephosphate isomerase family. As to quaternary structure, homodimer.

It localises to the cytoplasm. The catalysed reaction is D-glyceraldehyde 3-phosphate = dihydroxyacetone phosphate. Its pathway is carbohydrate biosynthesis; gluconeogenesis. It participates in carbohydrate degradation; glycolysis; D-glyceraldehyde 3-phosphate from glycerone phosphate: step 1/1. Its function is as follows. Involved in the gluconeogenesis. Catalyzes stereospecifically the conversion of dihydroxyacetone phosphate (DHAP) to D-glyceraldehyde-3-phosphate (G3P). This is Triosephosphate isomerase from Francisella tularensis subsp. mediasiatica (strain FSC147).